Here is a 184-residue protein sequence, read N- to C-terminus: Probable archaeosortase E (184 aa).

A run of 4 helical transmembrane segments spans residues 27–47 (ILFL…LSYF), 86–106 (VVEE…IIVY), 114–134 (IIGI…IVLI), and 151–171 (IAGY…YLKI). Residue cysteine 90 is the Acyl-thioester intermediate of the active site. Arginine 130 acts as the Proton donor in catalysis.

It belongs to the exosortase/archaeosortase family. Archaeosortase E subfamily.

It is found in the cell membrane. In terms of biological role, transpeptidase that recognizes and modifies its substrate by proteolytic cleavage of a sorting signal. Following cleavage, a covalent intermediate is formed via a thioester bond between the archaeosortase and its substrate, which is then transferred and covalently attached to the cell membrane. This chain is Probable archaeosortase E, found in Methanocaldococcus jannaschii (strain ATCC 43067 / DSM 2661 / JAL-1 / JCM 10045 / NBRC 100440) (Methanococcus jannaschii).